A 428-amino-acid polypeptide reads, in one-letter code: uncharacterized protein (428 aa).

This is an uncharacterized protein from Treponema pallidum (strain Nichols).